The chain runs to 156 residues: Small ribosomal subunit protein uS7 (156 aa).

Belongs to the universal ribosomal protein uS7 family. Part of the 30S ribosomal subunit. Contacts proteins S9 and S11.

Functionally, one of the primary rRNA binding proteins, it binds directly to 16S rRNA where it nucleates assembly of the head domain of the 30S subunit. Is located at the subunit interface close to the decoding center, probably blocks exit of the E-site tRNA. The polypeptide is Small ribosomal subunit protein uS7 (Brucella anthropi (strain ATCC 49188 / DSM 6882 / CCUG 24695 / JCM 21032 / LMG 3331 / NBRC 15819 / NCTC 12168 / Alc 37) (Ochrobactrum anthropi)).